The primary structure comprises 598 residues: Arylsulfatase J (598 aa).

Positions 1–47 are cleaved as a signal peptide; the sequence is MAPRDSAEPLPPLSPQAWAWSGKFLAMGALAGFSVLSLLTYGYLCWG. Ca(2+) is bound by residues Asp-82, Asp-83, and Cys-120. The Nucleophile role is filled by Cys-120. Cys-120 bears the 3-oxoalanine (Cys) mark. Asn-155 is a glycosylation site (N-linked (GlcNAc...) asparagine). Position 174 (Lys-174) interacts with substrate. Residue His-176 is part of the active site. His-267 lines the substrate pocket. 2 N-linked (GlcNAc...) asparagine glycosylation sites follow: Asn-304 and Asn-316. Ca(2+) contacts are provided by Asp-325 and Asn-326. Lys-343 provides a ligand contact to substrate. Residues Asn-429, Asn-495, Asn-525, and Asn-563 are each glycosylated (N-linked (GlcNAc...) asparagine). The interval 532–598 is disordered; it reads RYPPKDPRSN…IKCHPSVATG (67 aa). Residues 559–583 show a composition bias toward basic residues; it reads KKKSNKTKAKKMQKKKSKARMRKQL.

It belongs to the sulfatase family. The cofactor is Ca(2+). The conversion to 3-oxoalanine (also known as C-formylglycine, FGly), of a serine or cysteine residue in prokaryotes and of a cysteine residue in eukaryotes, is critical for catalytic activity.

Its subcellular location is the secreted. This chain is Arylsulfatase J (Arsj), found in Mus musculus (Mouse).